Here is a 799-residue protein sequence, read N- to C-terminus: Protein translocase subunit SecA (799 aa).

ATP contacts are provided by residues Gln-85, Gly-103 to Thr-107, and Asp-504.

The protein belongs to the SecA family. Monomer and homodimer. Part of the essential Sec protein translocation apparatus which comprises SecA, SecYEG and auxiliary proteins SecDF. Other proteins may also be involved.

The protein resides in the cell membrane. Its subcellular location is the cytoplasm. It catalyses the reaction ATP + H2O + cellular proteinSide 1 = ADP + phosphate + cellular proteinSide 2.. In terms of biological role, part of the Sec protein translocase complex. Interacts with the SecYEG preprotein conducting channel. Has a central role in coupling the hydrolysis of ATP to the transfer of proteins into and across the cell membrane, serving as an ATP-driven molecular motor driving the stepwise translocation of polypeptide chains across the membrane. The protein is Protein translocase subunit SecA of Lactobacillus acidophilus (strain ATCC 700396 / NCK56 / N2 / NCFM).